A 368-amino-acid chain; its full sequence is Polymerase delta-interacting protein 2 (368 aa).

The transit peptide at 1 to 21 (MAGCVARRALAVGSRWWSRSL) directs the protein to the mitochondrion. In terms of domain architecture, ApaG spans 235–360 (RETTENIRVT…FSLESNKDEK (126 aa)). T292 carries the phosphothreonine modification.

In terms of assembly, interacts with PCNA and POLD2. Interacts with SSBP1. Interacts with PRIMPOL; leading to enhance DNA polymerase activity of PRIMPOL. Interacts with POLH. Interacts with POLD1; leading to stimulate DNA polymerase activity of POLD1.

The protein localises to the mitochondrion matrix. It localises to the nucleus. Functionally, involved in DNA damage tolerance by regulating translesion synthesis (TLS) of templates carrying DNA damage lesions such as 8oxoG and abasic sites. May act by stimulating activity of DNA polymerases involved in TLS, such as PRIMPOL and polymerase delta (POLD1). In Mus musculus (Mouse), this protein is Polymerase delta-interacting protein 2.